Here is a 739-residue protein sequence, read N- to C-terminus: Eukaryotic translation initiation factor 3 subunit B (739 aa).

The sufficient for interaction with HCR1 and TIF32 stretch occupies residues 1 to 98; the sequence is MSINEEDYLQ…LFIQFKSTES (98 aa). The interval 1–224 is sufficient for interaction with PIC8; it reads MSINEEDYLQ…GIQSWGGANF (224 aa). The RRM domain maps to 37-124; the sequence is NYIIVDGAPI…HRLLVNKLSD (88 aa). WD repeat units follow at residues 190–229, 231–293, 301–339, 343–385, 453–502, 537–579, and 592–630; these read PRKGFTSKYAKFSPKGTYLFSIHPQGIQSWGGANFNSIKR, FHQQ…RTFA, QKEMPWPLVKWSYDDKYCARQGPDALAIYETESNFQLLD, VKVD…QTAR, ELKD…KGGV, IENK…ETNK, and DKFSGMTNISWDPSGRFVAAWSTSWLHAIENGYRLYEFT.

It belongs to the eIF-3 subunit B family. As to quaternary structure, component of the eukaryotic translation initiation factor 3 (eIF-3) complex.

It is found in the cytoplasm. Its function is as follows. RNA-binding component of the eukaryotic translation initiation factor 3 (eIF-3) complex, which is involved in protein synthesis of a specialized repertoire of mRNAs and, together with other initiation factors, stimulates binding of mRNA and methionyl-tRNAi to the 40S ribosome. The eIF-3 complex specifically targets and initiates translation of a subset of mRNAs involved in cell proliferation. The polypeptide is Eukaryotic translation initiation factor 3 subunit B (Candida albicans (strain SC5314 / ATCC MYA-2876) (Yeast)).